Reading from the N-terminus, the 476-residue chain is Siroheme synthase (476 aa).

The segment at 1-203 (MNYFPVFADL…RQIEAAKKEL (203 aa)) is precorrin-2 dehydrogenase /sirohydrochlorin ferrochelatase. Residues 22–23 (TI) and 43–44 (QK) each bind NAD(+). Serine 128 carries the post-translational modification Phosphoserine. The uroporphyrinogen-III C-methyltransferase stretch occupies residues 214 to 476 (GSVSLVGAGP…LDSLRIERVA (263 aa)). Position 223 (proline 223) interacts with S-adenosyl-L-methionine. Catalysis depends on aspartate 246, which acts as the Proton acceptor. Lysine 268 acts as the Proton donor in catalysis. Residues 299 to 301 (GGD), valine 304, 329 to 330 (TA), methionine 381, and glycine 410 each bind S-adenosyl-L-methionine.

This sequence in the N-terminal section; belongs to the precorrin-2 dehydrogenase / sirohydrochlorin ferrochelatase family. It in the C-terminal section; belongs to the precorrin methyltransferase family.

The enzyme catalyses uroporphyrinogen III + 2 S-adenosyl-L-methionine = precorrin-2 + 2 S-adenosyl-L-homocysteine + H(+). The catalysed reaction is precorrin-2 + NAD(+) = sirohydrochlorin + NADH + 2 H(+). It catalyses the reaction siroheme + 2 H(+) = sirohydrochlorin + Fe(2+). It functions in the pathway cofactor biosynthesis; adenosylcobalamin biosynthesis; precorrin-2 from uroporphyrinogen III: step 1/1. Its pathway is cofactor biosynthesis; adenosylcobalamin biosynthesis; sirohydrochlorin from precorrin-2: step 1/1. It participates in porphyrin-containing compound metabolism; siroheme biosynthesis; precorrin-2 from uroporphyrinogen III: step 1/1. The protein operates within porphyrin-containing compound metabolism; siroheme biosynthesis; siroheme from sirohydrochlorin: step 1/1. It functions in the pathway porphyrin-containing compound metabolism; siroheme biosynthesis; sirohydrochlorin from precorrin-2: step 1/1. Multifunctional enzyme that catalyzes the SAM-dependent methylations of uroporphyrinogen III at position C-2 and C-7 to form precorrin-2 via precorrin-1. Then it catalyzes the NAD-dependent ring dehydrogenation of precorrin-2 to yield sirohydrochlorin. Finally, it catalyzes the ferrochelation of sirohydrochlorin to yield siroheme. The polypeptide is Siroheme synthase (Mannheimia succiniciproducens (strain KCTC 0769BP / MBEL55E)).